A 391-amino-acid chain; its full sequence is S-adenosylmethionine synthase (391 aa).

Residue H14 coordinates ATP. D16 contacts Mg(2+). E42 provides a ligand contact to K(+). Residues E55 and Q98 each coordinate L-methionine. The segment at 98 to 108 is flexible loop; the sequence is QSVDIAMGVDE. Residues 172–174, 238–239, D247, 253–254, A270, and K274 each bind ATP; these read DGK, RF, and RK. D247 provides a ligand contact to L-methionine. K278 is an L-methionine binding site.

The protein belongs to the AdoMet synthase family. In terms of assembly, homotetramer; dimer of dimers. Requires Mg(2+) as cofactor. The cofactor is K(+).

It localises to the cytoplasm. It carries out the reaction L-methionine + ATP + H2O = S-adenosyl-L-methionine + phosphate + diphosphate. It participates in amino-acid biosynthesis; S-adenosyl-L-methionine biosynthesis; S-adenosyl-L-methionine from L-methionine: step 1/1. Its function is as follows. Catalyzes the formation of S-adenosylmethionine (AdoMet) from methionine and ATP. The overall synthetic reaction is composed of two sequential steps, AdoMet formation and the subsequent tripolyphosphate hydrolysis which occurs prior to release of AdoMet from the enzyme. The protein is S-adenosylmethionine synthase of Clostridium botulinum (strain Langeland / NCTC 10281 / Type F).